The chain runs to 245 residues: Probable metal transport system ATP-binding protein CPn_0542/CP_0210/CPj0542/CpB0563 (245 aa).

The ABC transporter domain maps to 5 to 240 (ILAEGLAFRY…CCHPYKNQEF (236 aa)). Residue 39–46 (GPNGGGKS) coordinates ATP.

It belongs to the ABC transporter superfamily.

The protein localises to the cell inner membrane. Its function is as follows. Part of an ATP-driven transport system CPn0541/CPn0542/CPn0543 for a metal. Probably responsible for energy coupling to the transport system. The sequence is that of Probable metal transport system ATP-binding protein CPn_0542/CP_0210/CPj0542/CpB0563 from Chlamydia pneumoniae (Chlamydophila pneumoniae).